The sequence spans 361 residues: 5-formaminoimidazole-4-carboxamide-1-(beta)-D-ribofuranosyl 5'-monophosphate synthetase (361 aa).

5-amino-1-(5-phospho-beta-D-ribosyl)imidazole-4-carboxamide is bound by residues His-27 and Ser-94. Residues 116–348 (RQILRWEAER…MGQRIAKEIK (233 aa)) form the ATP-grasp domain. Residues 146-208 (PDEI…TNYC) and Glu-230 contribute to the ATP site. Residue Asn-258 coordinates 5-amino-1-(5-phospho-beta-D-ribosyl)imidazole-4-carboxamide. Mg(2+) is bound by residues Gln-297 and Glu-310.

Belongs to the phosphohexose mutase family. Mg(2+) serves as cofactor. Mn(2+) is required as a cofactor.

It catalyses the reaction 5-amino-1-(5-phospho-beta-D-ribosyl)imidazole-4-carboxamide + formate + ATP = 5-formamido-1-(5-phospho-D-ribosyl)imidazole-4-carboxamide + ADP + phosphate. Its pathway is purine metabolism; IMP biosynthesis via de novo pathway; 5-formamido-1-(5-phospho-D-ribosyl)imidazole-4-carboxamide from 5-amino-1-(5-phospho-D-ribosyl)imidazole-4-carboxamide (formate route): step 1/1. Catalyzes the ATP- and formate-dependent formylation of 5-aminoimidazole-4-carboxamide-1-beta-d-ribofuranosyl 5'-monophosphate (AICAR) to 5-formaminoimidazole-4-carboxamide-1-beta-d-ribofuranosyl 5'-monophosphate (FAICAR) in the absence of folates. The polypeptide is 5-formaminoimidazole-4-carboxamide-1-(beta)-D-ribofuranosyl 5'-monophosphate synthetase (Methanococcus aeolicus (strain ATCC BAA-1280 / DSM 17508 / OCM 812 / Nankai-3)).